Consider the following 444-residue polypeptide: N-succinylarginine dihydrolase (444 aa).

Residues 19-28, N110, and 137-138 each bind substrate; these read AGLSFGNVAS and HR. E174 is an active-site residue. A substrate-binding site is contributed by R214. H250 is an active-site residue. Positions 252 and 362 each coordinate substrate. The Nucleophile role is filled by C368.

It belongs to the succinylarginine dihydrolase family. Homodimer.

The catalysed reaction is N(2)-succinyl-L-arginine + 2 H2O + 2 H(+) = N(2)-succinyl-L-ornithine + 2 NH4(+) + CO2. Its pathway is amino-acid degradation; L-arginine degradation via AST pathway; L-glutamate and succinate from L-arginine: step 2/5. Catalyzes the hydrolysis of N(2)-succinylarginine into N(2)-succinylornithine, ammonia and CO(2). The chain is N-succinylarginine dihydrolase from Shewanella denitrificans (strain OS217 / ATCC BAA-1090 / DSM 15013).